We begin with the raw amino-acid sequence, 209 residues long: Chloramphenicol acetyltransferase (209 aa).

His-189 (proton acceptor) is an active-site residue.

Belongs to the chloramphenicol acetyltransferase family. In terms of assembly, homotrimer.

The enzyme catalyses chloramphenicol + acetyl-CoA = chloramphenicol 3-acetate + CoA. In terms of biological role, this enzyme is an effector of chloramphenicol resistance in bacteria. The polypeptide is Chloramphenicol acetyltransferase (Staphylococcus aureus).